A 438-amino-acid polypeptide reads, in one-letter code: Transposon Ty2-OR2 Gag polyprotein (438 aa).

Disordered stretches follow at residues 1-88, 365-397, and 419-438; these read MESQ…YQQH, NVSRTSPNTTNTKVTTRNYHRTNSSKPRAAKAH, and SSQYLSDDNELSLRPATERI. Polar residues-rich tracts occupy residues 19–39 and 49–60; these read ASVTSKEVPSNQDPLAVSASN and KVNSQEETTPGT. Residues 295-397 are RNA-binding; that stretch reads ENNINVSDRL…SSKPRAAKAH (103 aa). Residues 369-381 show a composition bias toward low complexity; sequence TSPNTTNTKVTTR.

Homotrimer.

It is found in the cytoplasm. Capsid protein (CA) is the structural component of the virus-like particle (VLP), forming the shell that encapsulates the retrotransposons dimeric RNA genome. The particles are assembled from trimer-clustered units and there are holes in the capsid shells that allow for the diffusion of macromolecules. CA also has nucleocapsid-like chaperone activity, promoting primer tRNA(i)-Met annealing to the multipartite primer-binding site (PBS), dimerization of Ty2 RNA and initiation of reverse transcription. The sequence is that of Transposon Ty2-OR2 Gag polyprotein (TY2A-OR2) from Saccharomyces cerevisiae (strain ATCC 204508 / S288c) (Baker's yeast).